A 333-amino-acid polypeptide reads, in one-letter code: DNA-directed RNA polymerase subunit alpha (333 aa).

Positions 1 to 234 (MQSSVNEFLT…QQLAAFVDLK (234 aa)) are alpha N-terminal domain (alpha-NTD). The alpha C-terminal domain (alpha-CTD) stretch occupies residues 248–333 (IDPILLRPVD…SLKKDDKATA (86 aa)).

Belongs to the RNA polymerase alpha chain family. Homodimer. The RNAP catalytic core consists of 2 alpha, 1 beta, 1 beta' and 1 omega subunit. When a sigma factor is associated with the core the holoenzyme is formed, which can initiate transcription.

It catalyses the reaction RNA(n) + a ribonucleoside 5'-triphosphate = RNA(n+1) + diphosphate. Its function is as follows. DNA-dependent RNA polymerase catalyzes the transcription of DNA into RNA using the four ribonucleoside triphosphates as substrates. This chain is DNA-directed RNA polymerase subunit alpha, found in Stutzerimonas stutzeri (strain A1501) (Pseudomonas stutzeri).